Consider the following 392-residue polypeptide: Formate-dependent phosphoribosylglycinamide formyltransferase (392 aa).

Residues 22–23 (EL) and Glu-82 contribute to the N(1)-(5-phospho-beta-D-ribosyl)glycinamide site. ATP contacts are provided by residues Arg-114, Lys-155, 160 to 165 (SSGKGQ), 195 to 198 (EGLV), and Glu-203. Residues 119 to 308 (RLAAETLGVP…EFALHVRAFL (190 aa)) enclose the ATP-grasp domain. Mg(2+) contacts are provided by Glu-267 and Glu-279. N(1)-(5-phospho-beta-D-ribosyl)glycinamide-binding positions include Asp-286, Lys-355, and 362–363 (RR).

Belongs to the PurK/PurT family. As to quaternary structure, homodimer.

The enzyme catalyses N(1)-(5-phospho-beta-D-ribosyl)glycinamide + formate + ATP = N(2)-formyl-N(1)-(5-phospho-beta-D-ribosyl)glycinamide + ADP + phosphate + H(+). It participates in purine metabolism; IMP biosynthesis via de novo pathway; N(2)-formyl-N(1)-(5-phospho-D-ribosyl)glycinamide from N(1)-(5-phospho-D-ribosyl)glycinamide (formate route): step 1/1. Functionally, involved in the de novo purine biosynthesis. Catalyzes the transfer of formate to 5-phospho-ribosyl-glycinamide (GAR), producing 5-phospho-ribosyl-N-formylglycinamide (FGAR). Formate is provided by PurU via hydrolysis of 10-formyl-tetrahydrofolate. In Pectobacterium carotovorum subsp. carotovorum (strain PC1), this protein is Formate-dependent phosphoribosylglycinamide formyltransferase.